A 343-amino-acid polypeptide reads, in one-letter code: Protein RecA (343 aa).

66 to 73 (GPESSGKT) contacts ATP.

This sequence belongs to the RecA family.

The protein resides in the cytoplasm. Can catalyze the hydrolysis of ATP in the presence of single-stranded DNA, the ATP-dependent uptake of single-stranded DNA by duplex DNA, and the ATP-dependent hybridization of homologous single-stranded DNAs. It interacts with LexA causing its activation and leading to its autocatalytic cleavage. The polypeptide is Protein RecA (Rickettsia canadensis (strain McKiel)).